We begin with the raw amino-acid sequence, 560 residues long: MNRKWEAKLKQIEERASHYERKPLSSVYRPRLSKPEEPPSIWRLFHRQAQAFNFVKSCKEDVHVFALECKVGDGQRIYLVTTYAEFWFYYKSRKNLLHCYEVIPENAVCKLYFDLEFNKPANPGADGKKMVALLIEYVCKALQELYGVNCSAEDVLNLDSSTDEKFSRHLIFQLHDVAFKDNIHVGNFLRKILQPALDLLGSEDDDSAPETTGHGFPHFSEAPARQGFSFNKMFTEKATEESWTSNSKKLERLGSAEQSSPDLSFLVVKNNMGEKHLFVDLGVYTRNRNFRLYKSSKIGKRVALEVTEDNKFFPIQSKDVSDEYQYFLSSLVSNVRFSDTLRILTCEPSQNKQKGVGYFNSIGTSVETIEGFQCSPYPEVDHFVLSLVNKDGIKGGIRRWNYFFPEELLVYDICKYRWCENIGRAHKSNNIMILVDLKNEVWYQKCHDPVCKAENFKSDCFPLPAEVCLLFLFKEEEEFTTDEADETRSNETQNPHKPSPSRLSTGASADAVWDNGIDDAYFLEATEDAELAEAAENSLLSYNSEVDEIPDELIIEVLQE.

The stretch at 1 to 22 (MNRKWEAKLKQIEERASHYERK) forms a coiled coil. Substrate contacts are provided by residues Arg76, 114-116 (DLE), and 165-169 (KFSRH). Residues Asp114 and Glu116 each contribute to the Mn(2+) site. The tract at residues 203–223 (EDDDSAPETTGHGFPHFSEAP) is disordered. Ser255 carries the post-translational modification Phosphoserine. Residues 288 to 291 (RNFR) and Lys297 each bind substrate. 4 residues coordinate Zn(2+): Cys419, His426, Cys446, and Cys451. Positions 419–452 (CENIGRAHKSNNIMILVDLKNEVWYQKCHDPVCK) match the Zinc knuckle motif motif. The disordered stretch occupies residues 480–507 (TTDEADETRSNETQNPHKPSPSRLSTGA). Residues 481–560 (TDEADETRSN…DELIIEVLQE (80 aa)) form an interaction with RPA1 region. Over residues 490–507 (NETQNPHKPSPSRLSTGA) the composition is skewed to polar residues. Short sequence motifs (RPA1-binding motif) lie at residues 513–527 (WDNGIDDAYFLEATE) and 548–556 (EIPDELIIE).

This sequence belongs to the eukaryotic-type primase small subunit family. In terms of assembly, interacts with RPA1; leading to recruitment to chromatin and stimulate DNA primase activity. Interacts with SSBP1. Interacts with POLDIP2; leading to enhance DNA polymerase activity. The cofactor is Mn(2+).

The protein resides in the nucleus. It is found in the mitochondrion matrix. The protein localises to the chromosome. It carries out the reaction ssDNA + n NTP = ssDNA/pppN(pN)n-1 hybrid + (n-1) diphosphate.. The catalysed reaction is DNA(n) + a 2'-deoxyribonucleoside 5'-triphosphate = DNA(n+1) + diphosphate. Its function is as follows. DNA primase and DNA polymerase required to tolerate replication-stalling lesions by bypassing them. Required to facilitate mitochondrial and nuclear replication fork progression by initiating de novo DNA synthesis using dNTPs and acting as an error-prone DNA polymerase able to bypass certain DNA lesions. Shows a high capacity to tolerate DNA damage lesions such as 8oxoG and abasic sites in DNA. Provides different translesion synthesis alternatives when DNA replication is stalled: able to synthesize DNA primers downstream of lesions, such as ultraviolet (UV) lesions, R-loops and G-quadruplexes, to allow DNA replication to continue. Can also realign primers ahead of 'unreadable lesions' such as abasic sites and 6-4 photoproduct (6-4 pyrimidine-pyrimidinone), thereby skipping the lesion. Repriming avoids fork degradation while leading to accumulation of internal ssDNA gaps behind the forks. Also able to incorporate nucleotides opposite DNA lesions such as 8oxoG, like a regular translesion synthesis DNA polymerase. Also required for reinitiating stalled forks after UV damage during nuclear DNA replication. Required for mitochondrial DNA (mtDNA) synthesis and replication, by reinitiating synthesis after UV damage or in the presence of chain-terminating nucleotides. Prevents APOBEC family-mediated DNA mutagenesis by repriming downstream of abasic site to prohibit error-prone translesion synthesis. Has non-overlapping function with POLH. In addition to its role in DNA damage response, also required to maintain efficient nuclear and mitochondrial DNA replication in unperturbed cells. The polypeptide is DNA-directed primase/polymerase protein (Homo sapiens (Human)).